The following is an 868-amino-acid chain: DNA topoisomerase 1 (868 aa).

The 146-residue stretch at 3 to 148 (KSLVIVESPA…RFSRVVFNEI (146 aa)) folds into the Toprim domain. 2 residues coordinate Mg(2+): E9 and D117. Residues 164 to 581 (NLDRVNAQQT…QFFKDFSQQL (418 aa)) form the Topo IA-type catalytic domain. The interval 198–203 (SAGRVQ) is interaction with DNA. Y325 (O-(5'-phospho-DNA)-tyrosine intermediate) is an active-site residue. 3 C4-type zinc fingers span residues 605 to 636 (CPTC…KERC), 667 to 694 (CPKC…NPNC), and 716 to 739 (CDKC…CTSC).

This sequence belongs to the type IA topoisomerase family. In terms of assembly, monomer. Requires Mg(2+) as cofactor.

The enzyme catalyses ATP-independent breakage of single-stranded DNA, followed by passage and rejoining.. Releases the supercoiling and torsional tension of DNA, which is introduced during the DNA replication and transcription, by transiently cleaving and rejoining one strand of the DNA duplex. Introduces a single-strand break via transesterification at a target site in duplex DNA. The scissile phosphodiester is attacked by the catalytic tyrosine of the enzyme, resulting in the formation of a DNA-(5'-phosphotyrosyl)-enzyme intermediate and the expulsion of a 3'-OH DNA strand. The free DNA strand then undergoes passage around the unbroken strand, thus removing DNA supercoils. Finally, in the religation step, the DNA 3'-OH attacks the covalent intermediate to expel the active-site tyrosine and restore the DNA phosphodiester backbone. This Pasteurella multocida (strain Pm70) protein is DNA topoisomerase 1.